The chain runs to 298 residues: Acetylglutamate kinase (298 aa).

Substrate is bound by residues 69 to 70 (GG), R91, and N196.

This sequence belongs to the acetylglutamate kinase family. ArgB subfamily.

Its subcellular location is the cytoplasm. The catalysed reaction is N-acetyl-L-glutamate + ATP = N-acetyl-L-glutamyl 5-phosphate + ADP. It functions in the pathway amino-acid biosynthesis; L-arginine biosynthesis; N(2)-acetyl-L-ornithine from L-glutamate: step 2/4. Catalyzes the ATP-dependent phosphorylation of N-acetyl-L-glutamate. This is Acetylglutamate kinase from Bradyrhizobium sp. (strain ORS 278).